The primary structure comprises 150 residues: 3-hydroxyacyl-[acyl-carrier-protein] dehydratase FabZ (150 aa).

Histidine 47 is a catalytic residue.

This sequence belongs to the thioester dehydratase family. FabZ subfamily.

The protein localises to the cytoplasm. The catalysed reaction is a (3R)-hydroxyacyl-[ACP] = a (2E)-enoyl-[ACP] + H2O. Involved in unsaturated fatty acids biosynthesis. Catalyzes the dehydration of short chain beta-hydroxyacyl-ACPs and long chain saturated and unsaturated beta-hydroxyacyl-ACPs. The polypeptide is 3-hydroxyacyl-[acyl-carrier-protein] dehydratase FabZ (Verminephrobacter eiseniae (strain EF01-2)).